A 152-amino-acid chain; its full sequence is Xanthine-guanine phosphoribosyltransferase (152 aa).

Residues 37-38, Arg69, and 88-96 each bind 5-phospho-alpha-D-ribose 1-diphosphate; these read RG and DDLVDTGGT. Position 69 (Arg69) interacts with GMP. Position 89 (Asp89) interacts with Mg(2+). 2 residues coordinate guanine: Asp92 and Ile135. Residues Asp92 and Ile135 each contribute to the xanthine site. Residues 92–96 and 134–135 each bind GMP; these read DTGGT and WI.

The protein belongs to the purine/pyrimidine phosphoribosyltransferase family. XGPT subfamily. In terms of assembly, homotetramer. Mg(2+) is required as a cofactor.

Its subcellular location is the cell inner membrane. It catalyses the reaction GMP + diphosphate = guanine + 5-phospho-alpha-D-ribose 1-diphosphate. The enzyme catalyses XMP + diphosphate = xanthine + 5-phospho-alpha-D-ribose 1-diphosphate. The catalysed reaction is IMP + diphosphate = hypoxanthine + 5-phospho-alpha-D-ribose 1-diphosphate. It functions in the pathway purine metabolism; GMP biosynthesis via salvage pathway; GMP from guanine: step 1/1. The protein operates within purine metabolism; XMP biosynthesis via salvage pathway; XMP from xanthine: step 1/1. Functionally, purine salvage pathway enzyme that catalyzes the transfer of the ribosyl-5-phosphate group from 5-phospho-alpha-D-ribose 1-diphosphate (PRPP) to the N9 position of the 6-oxopurines guanine and xanthine to form the corresponding ribonucleotides GMP (guanosine 5'-monophosphate) and XMP (xanthosine 5'-monophosphate), with the release of PPi. To a lesser extent, also acts on hypoxanthine. This Pectobacterium atrosepticum (strain SCRI 1043 / ATCC BAA-672) (Erwinia carotovora subsp. atroseptica) protein is Xanthine-guanine phosphoribosyltransferase.